A 468-amino-acid chain; its full sequence is IQ domain-containing protein C (468 aa).

The 30-residue stretch at 6-35 folds into the IQ domain; sequence LVLKVTALQACIRGFLVRRQFQSLRGEYEA. Disordered regions lie at residues 113–157, 202–245, and 329–468; these read NASS…GPGL, EVNQ…PGEP, and SHKE…GPAG. Positions 139–150 are enriched in basic and acidic residues; sequence QETRDVSRKNDP. Basic and acidic residues predominate over residues 415–426; sequence SSIERSPSESSH.

The sequence is that of IQ domain-containing protein C (IQCC) from Bos taurus (Bovine).